Here is a 443-residue protein sequence, read N- to C-terminus: Probable glycine dehydrogenase (decarboxylating) subunit 1 (443 aa).

Belongs to the GcvP family. N-terminal subunit subfamily. The glycine cleavage system is composed of four proteins: P, T, L and H. In this organism, the P 'protein' is a heterodimer of two subunits.

The enzyme catalyses N(6)-[(R)-lipoyl]-L-lysyl-[glycine-cleavage complex H protein] + glycine + H(+) = N(6)-[(R)-S(8)-aminomethyldihydrolipoyl]-L-lysyl-[glycine-cleavage complex H protein] + CO2. In terms of biological role, the glycine cleavage system catalyzes the degradation of glycine. The P protein binds the alpha-amino group of glycine through its pyridoxal phosphate cofactor; CO(2) is released and the remaining methylamine moiety is then transferred to the lipoamide cofactor of the H protein. The chain is Probable glycine dehydrogenase (decarboxylating) subunit 1 from Nitratidesulfovibrio vulgaris (strain DSM 19637 / Miyazaki F) (Desulfovibrio vulgaris).